A 72-amino-acid polypeptide reads, in one-letter code: Translation initiation factor IF-1 (72 aa).

An S1-like domain is found at 1–72 (MSKEDHIEME…SKARITFRHR (72 aa)).

This sequence belongs to the IF-1 family. In terms of assembly, component of the 30S ribosomal translation pre-initiation complex which assembles on the 30S ribosome in the order IF-2 and IF-3, IF-1 and N-formylmethionyl-tRNA(fMet); mRNA recruitment can occur at any time during PIC assembly.

The protein localises to the cytoplasm. Its function is as follows. One of the essential components for the initiation of protein synthesis. Stabilizes the binding of IF-2 and IF-3 on the 30S subunit to which N-formylmethionyl-tRNA(fMet) subsequently binds. Helps modulate mRNA selection, yielding the 30S pre-initiation complex (PIC). Upon addition of the 50S ribosomal subunit IF-1, IF-2 and IF-3 are released leaving the mature 70S translation initiation complex. The protein is Translation initiation factor IF-1 of Methylococcus capsulatus (strain ATCC 33009 / NCIMB 11132 / Bath).